Here is a 462-residue protein sequence, read N- to C-terminus: Annexin A7 (462 aa).

A disordered region spans residues 1 to 130; sequence MSYPPNQGYP…QGYPPQQGYP (130 aa). Residues 7–131 form a 19 X 6 AA tandem repeats of Q-G-Y-P-P-Q region; it reads QGYPPQSNSP…GYPPQQGYPP (125 aa). A compositionally biased stretch (low complexity) spans 16-130; it reads PQPGQYGAPQ…QGYPPQQGYP (115 aa). Annexin repeat units lie at residues 161–232, 233–304, 315–388, and 392–462; these read HDCK…ALLT, EPAH…KLTE, MQVS…AIVT, and NPYG…DIIS.

Belongs to the annexin family.

In terms of biological role, calcium/phospholipid-binding protein which promotes membrane fusion and is involved in exocytosis. In Dictyostelium discoideum (Social amoeba), this protein is Annexin A7 (nxnA).